The following is a 498-amino-acid chain: ATP synthase subunit beta, chloroplastic (498 aa).

172 to 179 contributes to the ATP binding site; sequence GGAGVGKT.

This sequence belongs to the ATPase alpha/beta chains family. F-type ATPases have 2 components, CF(1) - the catalytic core - and CF(0) - the membrane proton channel. CF(1) has five subunits: alpha(3), beta(3), gamma(1), delta(1), epsilon(1). CF(0) has four main subunits: a(1), b(1), b'(1) and c(9-12).

Its subcellular location is the plastid. The protein resides in the chloroplast thylakoid membrane. The enzyme catalyses ATP + H2O + 4 H(+)(in) = ADP + phosphate + 5 H(+)(out). Its function is as follows. Produces ATP from ADP in the presence of a proton gradient across the membrane. The catalytic sites are hosted primarily by the beta subunits. The polypeptide is ATP synthase subunit beta, chloroplastic (Platanus occidentalis (Sycamore)).